The primary structure comprises 206 residues: Nucleoside triphosphate pyrophosphatase (206 aa).

Catalysis depends on Asp78, which acts as the Proton acceptor.

Belongs to the Maf family. A divalent metal cation is required as a cofactor.

The protein resides in the cytoplasm. The enzyme catalyses a ribonucleoside 5'-triphosphate + H2O = a ribonucleoside 5'-phosphate + diphosphate + H(+). It carries out the reaction a 2'-deoxyribonucleoside 5'-triphosphate + H2O = a 2'-deoxyribonucleoside 5'-phosphate + diphosphate + H(+). In terms of biological role, nucleoside triphosphate pyrophosphatase. May have a dual role in cell division arrest and in preventing the incorporation of modified nucleotides into cellular nucleic acids. This is Nucleoside triphosphate pyrophosphatase from Prochlorococcus marinus (strain MIT 9312).